The sequence spans 198 residues: Holliday junction branch migration complex subunit RuvA (198 aa).

Residues 1–63 (MIAYLSGAVR…EDAQLLFGFL (63 aa)) are domain I. The tract at residues 64–142 (DTDSLRLFDL…EHLAAGAPVS (79 aa)) is domain II. The flexible linker stretch occupies residues 143–150 (AGKAALTS). Residues 150 to 198 (STAGRDAIEALLALGFREPQVRSVVAELLAADPEQSADALIRKGLGKLR) form a domain III region.

Belongs to the RuvA family. In terms of assembly, homotetramer. Forms an RuvA(8)-RuvB(12)-Holliday junction (HJ) complex. HJ DNA is sandwiched between 2 RuvA tetramers; dsDNA enters through RuvA and exits via RuvB. An RuvB hexamer assembles on each DNA strand where it exits the tetramer. Each RuvB hexamer is contacted by two RuvA subunits (via domain III) on 2 adjacent RuvB subunits; this complex drives branch migration. In the full resolvosome a probable DNA-RuvA(4)-RuvB(12)-RuvC(2) complex forms which resolves the HJ.

The protein localises to the cytoplasm. In terms of biological role, the RuvA-RuvB-RuvC complex processes Holliday junction (HJ) DNA during genetic recombination and DNA repair, while the RuvA-RuvB complex plays an important role in the rescue of blocked DNA replication forks via replication fork reversal (RFR). RuvA specifically binds to HJ cruciform DNA, conferring on it an open structure. The RuvB hexamer acts as an ATP-dependent pump, pulling dsDNA into and through the RuvAB complex. HJ branch migration allows RuvC to scan DNA until it finds its consensus sequence, where it cleaves and resolves the cruciform DNA. The sequence is that of Holliday junction branch migration complex subunit RuvA from Deinococcus geothermalis (strain DSM 11300 / CIP 105573 / AG-3a).